Here is a 524-residue protein sequence, read N- to C-terminus: Excitatory amino acid transporter 3 (524 aa).

The Cytoplasmic segment spans residues 1–18; that stretch reads MGKPARKGCEWKRFLKNN. Residues 19-38 form a helical membrane-spanning segment; it reads WVLLSTVAAVVLGITTGVLV. At 39-61 the chain is on the extracellular side; the sequence is REHSNLSTLEKFYFAFPGEILMR. N-linked (GlcNAc...) asparagine glycosylation is present at Asn43. Residues 62–82 form a helical membrane-spanning segment; sequence MLKLIILPLIISSMITGVAAL. Over 83–93 the chain is Cytoplasmic; the sequence is DSNVSGKIGLR. Residues 94 to 114 form a helical membrane-spanning segment; sequence AVVYYFCTTLIAVILGIVLVV. 3 residues coordinate Na(+): Tyr98, Thr101, and Thr102. The Extracellular portion of the chain corresponds to 115-205; sequence SIKPGVTQKV…KTKEYKIVGM (91 aa). 2 N-linked (GlcNAc...) asparagine glycosylation sites follow: Asn178 and Asn195. Residues 206–229 form a helical membrane-spanning segment; that stretch reads YSDGINVLGLIVFCLVFGLVIGKM. Residues 230–238 lie on the Cytoplasmic side of the membrane; the sequence is GEKGQILVD. A helical transmembrane segment spans residues 239-266; it reads FFNALSDATMKIVQIIMCYMPLGILFLI. The Extracellular segment spans residues 267–286; it reads AGKIIEVEDWEIFRKLGLYM. Residues 287-308 form a helical membrane-spanning segment; that stretch reads ATVLTGLAIHSIVILPLIYFIV. Residues 309–313 lie on the Cytoplasmic side of the membrane; that stretch reads VRKNP. The discontinuously helical intramembrane region spans 314–344; that stretch reads FRFAMGMAQALLTALMISSSSATLPVTFRCA. Residues Ser331 and Ser333 each contribute to the L-aspartate site. The Cytoplasmic segment spans residues 345–353; that stretch reads EENNQVDKR. Residues 354–380 traverse the membrane as a helical segment; sequence ITRFVLPVGATINMDGTALYEAVAAVF. Residues Gly362, Thr364, Asn366, and Asp368 each coordinate Na(+). Thr370 lines the L-aspartate pocket. Residues 381-393 lie on the Extracellular side of the membrane; the sequence is IAQLNDLDLGIGQ. Positions 394 to 427 form an intramembrane region, discontinuously helical; the sequence is IITISITATSASIGAAGVPQAGLVTMVIVLSAVG. Na(+) is bound by residues Ser405, Ile406, and Ala408. Val411 contributes to the L-aspartate binding site. Over 428 to 440 the chain is Extracellular; it reads LPAEDVTLIIAVD. A helical transmembrane segment spans residues 441-462; it reads WLLDRFRTMVNVLGDAFGTGIV. L-aspartate contacts are provided by Arg447, Thr448, and Asn451. Na(+) contacts are provided by Asn451 and Asp455. The Cytoplasmic segment spans residues 463-524; that stretch reads EKLSKKELEQ…TISFTQTSQF (62 aa). A phosphoserine mark is found at Ser517 and Ser522.

It belongs to the dicarboxylate/amino acid:cation symporter (DAACS) (TC 2.A.23) family. SLC1A1 subfamily. In terms of assembly, homotrimer. Interacts with ARL6IP5. Interacts with RTN2 (via N-terminus); the interaction promotes cell surface expression of SLC1A1. Interacts with SORCS2; this interaction is important for normal expression at the cell membrane. Post-translationally, glycosylated. Expressed in all tissues tested including liver, muscle, testis, ovary, retinoblastoma cell line, neurons and brain (in which there was dense expression in substantia nigra, red nucleus, hippocampus and in cerebral cortical layers).

It is found in the cell membrane. The protein localises to the apical cell membrane. The protein resides in the synapse. Its subcellular location is the synaptosome. It localises to the early endosome membrane. It is found in the late endosome membrane. The protein localises to the recycling endosome membrane. It catalyses the reaction K(+)(in) + L-glutamate(out) + 3 Na(+)(out) + H(+)(out) = K(+)(out) + L-glutamate(in) + 3 Na(+)(in) + H(+)(in). It carries out the reaction K(+)(in) + L-aspartate(out) + 3 Na(+)(out) + H(+)(out) = K(+)(out) + L-aspartate(in) + 3 Na(+)(in) + H(+)(in). The catalysed reaction is D-aspartate(out) + K(+)(in) + 3 Na(+)(out) + H(+)(out) = D-aspartate(in) + K(+)(out) + 3 Na(+)(in) + H(+)(in). The enzyme catalyses K(+)(in) + L-cysteine(out) + 3 Na(+)(out) + H(+)(out) = K(+)(out) + L-cysteine(in) + 3 Na(+)(in) + H(+)(in). Sodium-dependent, high-affinity amino acid transporter that mediates the uptake of L-glutamate and also L-aspartate and D-aspartate. Can also transport L-cysteine. Functions as a symporter that transports one amino acid molecule together with two or three Na(+) ions and one proton, in parallel with the counter-transport of one K(+) ion. Mediates Cl(-) flux that is not coupled to amino acid transport; this avoids the accumulation of negative charges due to aspartate and Na(+) symport. Plays an important role in L-glutamate and L-aspartate reabsorption in renal tubuli. Plays a redundant role in the rapid removal of released glutamate from the synaptic cleft, which is essential for terminating the postsynaptic action of glutamate. Contributes to glutathione biosynthesis and protection against oxidative stress via its role in L-glutamate and L-cysteine transport. Negatively regulated by ARL6IP5. This is Excitatory amino acid transporter 3 from Homo sapiens (Human).